The chain runs to 242 residues: Pyridoxine 5'-phosphate synthase (242 aa).

Asparagine 6 lines the 3-amino-2-oxopropyl phosphate pocket. 8-9 provides a ligand contact to 1-deoxy-D-xylulose 5-phosphate; sequence DH. Residue arginine 17 coordinates 3-amino-2-oxopropyl phosphate. Histidine 42 functions as the Proton acceptor in the catalytic mechanism. Residues arginine 44 and histidine 49 each contribute to the 1-deoxy-D-xylulose 5-phosphate site. Glutamate 69 functions as the Proton acceptor in the catalytic mechanism. Threonine 99 contributes to the 1-deoxy-D-xylulose 5-phosphate binding site. Histidine 190 functions as the Proton donor in the catalytic mechanism. Residues glycine 191 and 212-213 contribute to the 3-amino-2-oxopropyl phosphate site; that span reads GH.

It belongs to the PNP synthase family. Homooctamer; tetramer of dimers.

The protein localises to the cytoplasm. The catalysed reaction is 3-amino-2-oxopropyl phosphate + 1-deoxy-D-xylulose 5-phosphate = pyridoxine 5'-phosphate + phosphate + 2 H2O + H(+). It participates in cofactor biosynthesis; pyridoxine 5'-phosphate biosynthesis; pyridoxine 5'-phosphate from D-erythrose 4-phosphate: step 5/5. Functionally, catalyzes the complicated ring closure reaction between the two acyclic compounds 1-deoxy-D-xylulose-5-phosphate (DXP) and 3-amino-2-oxopropyl phosphate (1-amino-acetone-3-phosphate or AAP) to form pyridoxine 5'-phosphate (PNP) and inorganic phosphate. The sequence is that of Pyridoxine 5'-phosphate synthase from Neisseria meningitidis serogroup A / serotype 4A (strain DSM 15465 / Z2491).